Here is a 158-residue protein sequence, read N- to C-terminus: Probable flavodoxin 1 (158 aa).

One can recognise a Flavodoxin-like domain in the interval 4 to 144; it reads ALITYASMSG…SCRAFARGFL (141 aa).

Belongs to the flavodoxin family. FMN serves as cofactor.

Functionally, low-potential electron donor to a number of redox enzymes. In Bacillus subtilis (strain 168), this protein is Probable flavodoxin 1 (ykuN).